The following is a 114-amino-acid chain: FK506-binding protein 1 (114 aa).

A PPIase FKBP-type domain is found at glycine 26–asparagine 114.

The protein belongs to the FKBP-type PPIase family. FKBP1 subfamily.

It localises to the cytoplasm. The enzyme catalyses [protein]-peptidylproline (omega=180) = [protein]-peptidylproline (omega=0). Its activity is regulated as follows. Inhibited by both FK506 and rapamycin. Its function is as follows. PPIases accelerate the folding of proteins. It catalyzes the cis-trans isomerization of proline imidic peptide bonds in oligopeptides. The protein is FK506-binding protein 1 (FPR1) of Kluyveromyces lactis (strain ATCC 8585 / CBS 2359 / DSM 70799 / NBRC 1267 / NRRL Y-1140 / WM37) (Yeast).